Consider the following 638-residue polypeptide: Plasma kallikrein (638 aa).

A signal peptide spans 1–19; sequence MILFNRVGYFVSLFATVSC. 4 consecutive Apple domains span residues 21–104, 111–194, 201–284, and 292–375; these read CMTQ…LKQC, CHRD…LKSC, CPMD…LLTC, and CHSK…LRLC. Cystine bridges form between cysteine 21-cysteine 104, cysteine 47-cysteine 77, cysteine 51-cysteine 57, cysteine 111-cysteine 194, cysteine 137-cysteine 166, cysteine 141-cysteine 147, cysteine 201-cysteine 284, cysteine 227-cysteine 256, cysteine 231-cysteine 237, cysteine 292-cysteine 375, cysteine 318-cysteine 347, cysteine 322-cysteine 328, cysteine 340-cysteine 345, cysteine 383-cysteine 503, cysteine 419-cysteine 435, cysteine 517-cysteine 584, cysteine 548-cysteine 563, and cysteine 574-cysteine 602. N-linked (GlcNAc...) asparagine glycosylation is present at asparagine 127. An N-linked (GlcNAc...) asparagine glycan is attached at asparagine 215. Asparagine 308 carries N-linked (GlcNAc...) asparagine glycosylation. The Peptidase S1 domain occupies 391–626; sequence IVGGTNASLG…YMDWILEKTQ (236 aa). An N-linked (GlcNAc...) asparagine glycan is attached at asparagine 396. Active-site charge relay system residues include histidine 434 and aspartate 483. The N-linked (GlcNAc...) asparagine glycan is linked to asparagine 494. The Charge relay system role is filled by serine 578.

It belongs to the peptidase S1 family. Plasma kallikrein subfamily. In terms of assembly, forms a heterodimer with SERPINA5. The zymogen is activated by factor XIIa, which cleaves the molecule into a light chain, which contains the active site, and a heavy chain, which associates with HMW kininogen. These chains are linked by one or more disulfide bonds.

Its subcellular location is the secreted. The enzyme catalyses Cleaves selectively Arg-|-Xaa and Lys-|-Xaa bonds, including Lys-|-Arg and Arg-|-Ser bonds in (human) kininogen to release bradykinin.. Its activity is regulated as follows. Inhibited by SERPINA5. The enzyme cleaves Lys-Arg and Arg-Ser bonds. It activates, in a reciprocal reaction, factor XII after its binding to a negatively charged surface. It also releases bradykinin from HMW kininogen and may also play a role in the renin-angiotensin system by converting prorenin into renin. In Mus musculus (Mouse), this protein is Plasma kallikrein (Klkb1).